Reading from the N-terminus, the 593-residue chain is Auxin response factor 12 (593 aa).

Positions 126–228 (FTKVLTASDT…ELRVGIRRAR (103 aa)) form a DNA-binding region, TF-B3. The PB1 domain occupies 511–592 (RTCTKVQMQG…MVKKIFIQKR (82 aa)).

Belongs to the ARF family. As to quaternary structure, homodimers and heterodimers.

It is found in the nucleus. In terms of biological role, auxin response factors (ARFs) are transcriptional factors that bind specifically to the DNA sequence 5'-TGTCTC-3' found in the auxin-responsive promoter elements (AuxREs). Could act as transcriptional activator or repressor. Formation of heterodimers with Aux/IAA proteins may alter their ability to modulate early auxin response genes expression. The sequence is that of Auxin response factor 12 (ARF12) from Arabidopsis thaliana (Mouse-ear cress).